A 759-amino-acid chain; its full sequence is Nucleolar RNA helicase 2-A (759 aa).

The disordered stretch occupies residues 1–154; the sequence is MPVKVYAEEM…KKRKTDTTEI (154 aa). Positions 77 to 86 are enriched in acidic residues; sequence ETAEECDGEQ. Positions 179–207 match the Q motif motif; the sequence is GDFSKFPLSKETIKNLQAKGVSYLFPIQS. The region spanning 210 to 389 is the Helicase ATP-binding domain; the sequence is FHTAYSGKDV…KKYMRKQFEK (180 aa). 223-230 contributes to the ATP binding site; the sequence is ARTGTGKT. The DEAD box signature appears at 332–335; the sequence is DEVD. Positions 422–566 constitute a Helicase C-terminal domain; the sequence is DLVQVYSGSH…VGVPSLLNVA (145 aa). A disordered region spans residues 709–759; it reads QESERNFDGPRNRGFGGRGRRPFDRRNNSRNSNRGGGGRGRNRNGGFRRGR. The segment covering 710-719 has biased composition (basic and acidic residues); sequence ESERNFDGPR. Basic residues predominate over residues 748-759; sequence GRNRNGGFRRGR.

This sequence belongs to the DEAD box helicase family. DDX21/DDX50 subfamily. In terms of tissue distribution, widely expressed. Expressed at higher level in stomach. Expressed at higher level compared to ddx21-b.

It localises to the nucleus. The protein resides in the nucleolus. Its subcellular location is the nucleoplasm. It is found in the cytoplasm. The protein localises to the cytosol. It localises to the mitochondrion. It catalyses the reaction ATP + H2O = ADP + phosphate + H(+). RNA helicase that acts as a sensor of the transcriptional status of both RNA polymerase (Pol) I and II: promotes ribosomal RNA (rRNA) processing and transcription from polymerase II (Pol II). Binds various RNAs, such as rRNAs, snoRNAs, 7SK and, at lower extent, mRNAs. In the nucleolus, localizes to rDNA locus, where it directly binds rRNAs and snoRNAs, and promotes rRNA transcription, processing and modification. Required for rRNA 2'-O-methylation, possibly by promoting the recruitment of late-acting snoRNAs SNORD56 and SNORD58 with pre-ribosomal complexes. In the nucleoplasm, binds 7SK RNA and is recruited to the promoters of Pol II-transcribed genes: acts by facilitating the release of P-TEFb from inhibitory 7SK snRNP in a manner that is dependent on its helicase activity, thereby promoting transcription of its target genes. Required to prevent R-loop-associated DNA damage and transcription-associated genomic instability. The chain is Nucleolar RNA helicase 2-A (ddx21-a) from Xenopus laevis (African clawed frog).